A 324-amino-acid polypeptide reads, in one-letter code: NADH-ubiquinone oxidoreductase chain 1 (324 aa).

The next 8 membrane-spanning stretches (helical) occupy residues 9–29 (LINP…LTLI), 75–95 (FLFL…WAPM), 106–126 (LGIL…LGSG), 146–166 (ISYE…SGGY), 177–197 (SIWL…STLA), 228–248 (LFFL…AVLF), 259–279 (ELTT…FLWV), and 299–319 (FLPL…ALAG).

This sequence belongs to the complex I subunit 1 family.

The protein localises to the mitochondrion inner membrane. The catalysed reaction is a ubiquinone + NADH + 5 H(+)(in) = a ubiquinol + NAD(+) + 4 H(+)(out). Core subunit of the mitochondrial membrane respiratory chain NADH dehydrogenase (Complex I) that is believed to belong to the minimal assembly required for catalysis. Complex I functions in the transfer of electrons from NADH to the respiratory chain. The immediate electron acceptor for the enzyme is believed to be ubiquinone. This is NADH-ubiquinone oxidoreductase chain 1 (MT-ND1) from Cyprinus carpio (Common carp).